The sequence spans 98 residues: Integration host factor subunit alpha (98 aa).

A disordered region spans residues 52–73; sequence FDLREKNQRPGRNPKTGEDIPI.

The protein belongs to the bacterial histone-like protein family. Heterodimer of an alpha and a beta chain.

Its function is as follows. This protein is one of the two subunits of integration host factor, a specific DNA-binding protein that functions in genetic recombination as well as in transcriptional and translational control. This is Integration host factor subunit alpha from Aeromonas hydrophila subsp. hydrophila (strain ATCC 7966 / DSM 30187 / BCRC 13018 / CCUG 14551 / JCM 1027 / KCTC 2358 / NCIMB 9240 / NCTC 8049).